We begin with the raw amino-acid sequence, 223 residues long: Putative synaptogyrin-2 like protein (223 aa).

Met1 carries the post-translational modification N-acetylmethionine. Ser3 bears the Phosphoserine mark. Residues 20–170 (FLTQPQVVAR…LASLTYQRYK (151 aa)) form the MARVEL domain. 4 consecutive transmembrane segments (helical) span residues 26–46 (VVAR…IYGE), 71–91 (GSAI…DAYF), 104–124 (VIGD…GFCF), and 146–166 (AAIT…SLTY). Residues 197–223 (ASVDNYQQPPFTQNAETTEGYQPPPVY) form a disordered region. The segment covering 200–216 (DNYQQPPFTQNAETTEG) has biased composition (polar residues).

Belongs to the synaptogyrin family.

It is found in the membrane. This chain is Putative synaptogyrin-2 like protein, found in Homo sapiens (Human).